We begin with the raw amino-acid sequence, 296 residues long: MPELPEVEVVRRGLEKWVVGASFGEVEVLHPRAVRRHAPGAADFAARVSGCGVTEARRRGKYLWLTLDSGEALLAHLGMSGQLLVQPRHAAAERHLRVRLPLTARQGHDPEAPQELRFVDQRTFGHLLVDRLVDDGTGTGLPSVISHIARDPLDPAFDEDAFAAALCRKRTELKRALLDQSLISGIGNIYADEALWMSQLHWATPTEALSRSQVATLLAAVREVMVAALAQGGTSFDSLYVNVNGESGYFARSLNAYGRNDQPCARCGTPIQRETFMNRSSYSCPRCQPRPRHARA.

Proline 2 (schiff-base intermediate with DNA) is an active-site residue. Glutamate 3 serves as the catalytic Proton donor. The active-site Proton donor; for beta-elimination activity is lysine 61. The DNA site is built by histidine 95, arginine 122, and lysine 169. An FPG-type zinc finger spans residues 255 to 289 (NAYGRNDQPCARCGTPIQRETFMNRSSYSCPRCQP). The Proton donor; for delta-elimination activity role is filled by arginine 279.

Belongs to the FPG family. As to quaternary structure, monomer. Requires Zn(2+) as cofactor.

The catalysed reaction is Hydrolysis of DNA containing ring-opened 7-methylguanine residues, releasing 2,6-diamino-4-hydroxy-5-(N-methyl)formamidopyrimidine.. The enzyme catalyses 2'-deoxyribonucleotide-(2'-deoxyribose 5'-phosphate)-2'-deoxyribonucleotide-DNA = a 3'-end 2'-deoxyribonucleotide-(2,3-dehydro-2,3-deoxyribose 5'-phosphate)-DNA + a 5'-end 5'-phospho-2'-deoxyribonucleoside-DNA + H(+). In terms of biological role, involved in base excision repair of DNA damaged by oxidation or by mutagenic agents. Acts as a DNA glycosylase that recognizes and removes damaged bases. Has a preference for oxidized purines, such as 7,8-dihydro-8-oxoguanine (8-oxoG). Has AP (apurinic/apyrimidinic) lyase activity and introduces nicks in the DNA strand. Cleaves the DNA backbone by beta-delta elimination to generate a single-strand break at the site of the removed base with both 3'- and 5'-phosphates. This chain is Formamidopyrimidine-DNA glycosylase, found in Thermobifida fusca (strain YX).